We begin with the raw amino-acid sequence, 119 residues long: Large ribosomal subunit protein bL20 (119 aa).

It belongs to the bacterial ribosomal protein bL20 family.

Functionally, binds directly to 23S ribosomal RNA and is necessary for the in vitro assembly process of the 50S ribosomal subunit. It is not involved in the protein synthesizing functions of that subunit. This Deinococcus geothermalis (strain DSM 11300 / CIP 105573 / AG-3a) protein is Large ribosomal subunit protein bL20.